A 350-amino-acid chain; its full sequence is Protein-glutamate methylesterase/protein-glutamine glutaminase (350 aa).

A Response regulatory domain is found at 5-122 (RVLCVDDSAL…REGMLAYSEL (118 aa)). D56 is modified (4-aspartylphosphate). Positions 153-345 (LLSSEKLIAI…QRMLAQISAG (193 aa)) constitute a CheB-type methylesterase domain. Catalysis depends on residues S165, H191, and D287.

It belongs to the CheB family. In terms of processing, phosphorylated by CheA. Phosphorylation of the N-terminal regulatory domain activates the methylesterase activity.

The protein localises to the cytoplasm. The catalysed reaction is [protein]-L-glutamate 5-O-methyl ester + H2O = L-glutamyl-[protein] + methanol + H(+). It carries out the reaction L-glutaminyl-[protein] + H2O = L-glutamyl-[protein] + NH4(+). Involved in chemotaxis. Part of a chemotaxis signal transduction system that modulates chemotaxis in response to various stimuli. Catalyzes the demethylation of specific methylglutamate residues introduced into the chemoreceptors (methyl-accepting chemotaxis proteins or MCP) by CheR. Also mediates the irreversible deamidation of specific glutamine residues to glutamic acid. Does not interact with the C-terminal pentapeptide of the chemoreceptors. The chain is Protein-glutamate methylesterase/protein-glutamine glutaminase from Pectobacterium atrosepticum (strain SCRI 1043 / ATCC BAA-672) (Erwinia carotovora subsp. atroseptica).